The following is a 396-amino-acid chain: Gap junction gamma-1 protein (396 aa).

Over 1 to 22 the chain is Cytoplasmic; the sequence is MSWSFLTRLLEEIHNHSTFVGK. The chain crosses the membrane as a helical span at residues 23-45; that stretch reads IWLTVLIAFRIALTAVGGESIYY. The Extracellular portion of the chain corresponds to 46–75; the sequence is DEQSKFVCNTEQPGCENVCYDAFAPLSHVR. A helical membrane pass occupies residues 76-95; the sequence is FWVFQIILVATPSVMYLGYA. Residues 96–175 lie on the Cytoplasmic side of the membrane; it reads IHKIAKMEHG…RRIREDGLMK (80 aa). Residues 145 to 165 are disordered; sequence ELESEKENKEQNQPKPKHDGR. A compositionally biased stretch (basic and acidic residues) spans 147–156; sequence ESEKENKEQN. Residues 176–198 traverse the membrane as a helical segment; sequence IYVLQLLARTVFEVGFLIGQYFL. Residues 199 to 228 lie on the Extracellular side of the membrane; that stretch reads YGFQVHPFYVCSRLPCPHKIDCFISRPTEK. Residues 229–248 traverse the membrane as a helical segment; it reads TIFLLIMYGVTGLCLLLNIW. Residues 249–396 are Cytoplasmic-facing; sequence EMLHLGFGTI…SGDGKNSVWI (148 aa). Positions 355-396 are disordered; that stretch reads AYSHQNNPHGPREKKAKVGSKAGSNKSSASSKSGDGKNSVWI. A compositionally biased stretch (low complexity) spans 373–396; it reads GSKAGSNKSSASSKSGDGKNSVWI.

This sequence belongs to the connexin family. Gamma-type subfamily. A connexon is composed of a hexamer of connexins. Interacts with CNST.

Its subcellular location is the cell membrane. It is found in the cell junction. It localises to the gap junction. Its function is as follows. One gap junction consists of a cluster of closely packed pairs of transmembrane channels, the connexons, through which materials of low MW diffuse from one cell to a neighboring cell. The sequence is that of Gap junction gamma-1 protein (GJC1) from Canis lupus familiaris (Dog).